The following is a 131-amino-acid chain: Mediator of RNA polymerase II transcription subunit 31 (131 aa).

Ala2 bears the N-acetylalanine mark.

Belongs to the Mediator complex subunit 31 family. In terms of assembly, component of the Mediator complex, which is composed of MED1, MED4, MED6, MED7, MED8, MED9, MED10, MED11, MED12, MED13, MED13L, MED14, MED15, MED16, MED17, MED18, MED19, MED20, MED21, MED22, MED23, MED24, MED25, MED26, MED27, MED29, MED30, MED31, CCNC, CDK8 and CDC2L6/CDK11. The MED12, MED13, CCNC and CDK8 subunits form a distinct module termed the CDK8 module. Mediator containing the CDK8 module is less active than Mediator lacking this module in supporting transcriptional activation. Individual preparations of the Mediator complex lacking one or more distinct subunits have been variously termed ARC, CRSP, DRIP, PC2, SMCC and TRAP.

It is found in the nucleus. In terms of biological role, component of the Mediator complex, a coactivator involved in the regulated transcription of nearly all RNA polymerase II-dependent genes. Mediator functions as a bridge to convey information from gene-specific regulatory proteins to the basal RNA polymerase II transcription machinery. Mediator is recruited to promoters by direct interactions with regulatory proteins and serves as a scaffold for the assembly of a functional preinitiation complex with RNA polymerase II and the general transcription factors. In Homo sapiens (Human), this protein is Mediator of RNA polymerase II transcription subunit 31 (MED31).